The chain runs to 294 residues: Light-independent protochlorophyllide reductase iron-sulfur ATP-binding protein (294 aa).

ATP-binding positions include 10–15 (GIGKST) and K39. Residue S14 participates in Mg(2+) binding. Positions 95 and 129 each coordinate [4Fe-4S] cluster. Residue 180–181 (NR) participates in ATP binding.

Belongs to the NifH/BchL/ChlL family. Homodimer. Protochlorophyllide reductase is composed of three subunits; ChlL, ChlN and ChlB. It depends on [4Fe-4S] cluster as a cofactor.

The protein resides in the plastid. The protein localises to the chloroplast. The enzyme catalyses chlorophyllide a + oxidized 2[4Fe-4S]-[ferredoxin] + 2 ADP + 2 phosphate = protochlorophyllide a + reduced 2[4Fe-4S]-[ferredoxin] + 2 ATP + 2 H2O. It functions in the pathway porphyrin-containing compound metabolism; chlorophyll biosynthesis (light-independent). Component of the dark-operative protochlorophyllide reductase (DPOR) that uses Mg-ATP and reduced ferredoxin to reduce ring D of protochlorophyllide (Pchlide) to form chlorophyllide a (Chlide). This reaction is light-independent. The L component serves as a unique electron donor to the NB-component of the complex, and binds Mg-ATP. The polypeptide is Light-independent protochlorophyllide reductase iron-sulfur ATP-binding protein (Pleurastrum terricola (Filamentous green alga)).